We begin with the raw amino-acid sequence, 274 residues long: Small ribosomal subunit biogenesis GTPase RsgA (274 aa).

Residues Lys-58 to Tyr-215 form the CP-type G domain. Residues Ser-108–Asp-111 and Gly-158–Thr-166 each bind GTP. The Zn(2+) site is built by Cys-238, Cys-243, His-245, and Cys-252.

The protein belongs to the TRAFAC class YlqF/YawG GTPase family. RsgA subfamily. In terms of assembly, monomer. Associates with 30S ribosomal subunit, binds 16S rRNA. Requires Zn(2+) as cofactor.

It is found in the cytoplasm. In terms of biological role, one of several proteins that assist in the late maturation steps of the functional core of the 30S ribosomal subunit. Helps release RbfA from mature subunits. May play a role in the assembly of ribosomal proteins into the subunit. Circularly permuted GTPase that catalyzes slow GTP hydrolysis, GTPase activity is stimulated by the 30S ribosomal subunit. This Mycoplasmoides gallisepticum (strain R(low / passage 15 / clone 2)) (Mycoplasma gallisepticum) protein is Small ribosomal subunit biogenesis GTPase RsgA.